The chain runs to 134 residues: MDRKMLKSKIHRATVTGADLHYEGSITIDLDLMEAADIIPYEAVCIWDVTNGSRFETYAIEGERGSGVICINGAAARLVAPQDLVIIASFVNMENAEAIAHEPKLVFVDDKNRMLESRKEVAGQATLKSVHWKN.

The active-site Schiff-base intermediate with substrate; via pyruvic acid is the S25. S25 is modified (pyruvic acid (Ser)). Position 57 (T57) interacts with substrate. Residue Y58 is the Proton donor of the active site. Residue 73–75 (GAA) participates in substrate binding.

This sequence belongs to the PanD family. Heterooctamer of four alpha and four beta subunits. Requires pyruvate as cofactor. Post-translationally, is synthesized initially as an inactive proenzyme, which is activated by self-cleavage at a specific serine bond to produce a beta-subunit with a hydroxyl group at its C-terminus and an alpha-subunit with a pyruvoyl group at its N-terminus.

Its subcellular location is the cytoplasm. It catalyses the reaction L-aspartate + H(+) = beta-alanine + CO2. The protein operates within cofactor biosynthesis; (R)-pantothenate biosynthesis; beta-alanine from L-aspartate: step 1/1. Catalyzes the pyruvoyl-dependent decarboxylation of aspartate to produce beta-alanine. The sequence is that of Aspartate 1-decarboxylase from Citrifermentans bemidjiense (strain ATCC BAA-1014 / DSM 16622 / JCM 12645 / Bem) (Geobacter bemidjiensis).